A 203-amino-acid polypeptide reads, in one-letter code: Outer-membrane lipoprotein LolB (203 aa).

Positions 1–21 (MRLSASLFHIALVTVLLVLAG) are cleaved as a signal peptide. Residue Cys22 is the site of N-palmitoyl cysteine attachment. Cys22 is lipidated: S-diacylglycerol cysteine.

The protein belongs to the LolB family. As to quaternary structure, monomer.

It localises to the cell outer membrane. Its function is as follows. Plays a critical role in the incorporation of lipoproteins in the outer membrane after they are released by the LolA protein. The protein is Outer-membrane lipoprotein LolB of Shewanella frigidimarina (strain NCIMB 400).